The primary structure comprises 266 residues: 14-3-3 protein homolog (266 aa).

A disordered region spans residues lysine 154–alanine 177. Residues aspartate 158–threonine 168 are compositionally biased toward polar residues.

This sequence belongs to the 14-3-3 family.

In Neospora caninum (Coccidian parasite), this protein is 14-3-3 protein homolog.